The following is a 225-amino-acid chain: MAIKDWPEGEGPRDKLLLKGASHLSDAELLAVLLRNGLSGLNAVDLARSLIQEFGGLRSLLCAPKHQVCRLPGVGPVKYAQLQAAAELARRVAQENLQRGQVLTNPDLTRDYLMRQLADRSYEVFAILLLDSQHRVIQFVELFRGTIDSASVYPREVVSLVLEKKAAAVIVCHNHPSGIAEPSQADRRITERLKNALATIDVSLLDHMVVGDREIVSFAERGWIN.

The MPN domain occupies 102–224 (VLTNPDLTRD…IVSFAERGWI (123 aa)). Zn(2+) is bound by residues His173, His175, and Asp186. The short motif at 173 to 186 (HNHPSGIAEPSQAD) is the JAMM motif element.

Belongs to the UPF0758 family.

The protein is UPF0758 protein SO_4248 of Shewanella oneidensis (strain ATCC 700550 / JCM 31522 / CIP 106686 / LMG 19005 / NCIMB 14063 / MR-1).